Consider the following 1013-residue polypeptide: Ephrin type-A receptor 5 (1013 aa).

An N-terminal signal peptide occupies residues 1–31 (MGLRGGGGRAGGPAPGWTCLLLCAALRSLLA). At 32-549 (SPGSEVNLLD…AASSDQSQIP (518 aa)) the chain is on the extracellular side. An Eph LBD domain is found at 36-214 (EVNLLDSRTV…YYKKCPSVIR (179 aa)). N-linked (GlcNAc...) asparagine glycosylation is found at N240, N275, N345, N399, N412, and N437. Fibronectin type-III domains lie at 333 to 443 (PPSA…TNQA) and 444 to 538 (APSP…TSPV). Residues 550–570 (IIVVSVTVGVILLAVVIGFLL) form a helical membrane-spanning segment. Residues 571 to 1013 (SGSCCDHGCG…VQLVNGMVPL (443 aa)) lie on the Cytoplasmic side of the membrane. Phosphotyrosine; by autocatalysis occurs at positions 626 and 632. The Protein kinase domain occupies 651–912 (ITIERVIGAG…EIVSMLDKLI (262 aa)). ATP is bound by residues 657–665 (IGAGEFGEV) and K683. D776 acts as the Proton acceptor in catalysis. Phosphotyrosine; by autocatalysis is present on residues Y809 and Y958. Residues 941–1013 (GAYRSVGEWL…VQLVNGMVPL (73 aa)) enclose the SAM domain. Positions 1011-1013 (VPL) match the PDZ-binding motif.

Belongs to the protein kinase superfamily. Tyr protein kinase family. Ephrin receptor subfamily. As to quaternary structure, heterotetramer upon binding of the ligand. The heterotetramer is composed of an ephrin dimer and a receptor dimer. Oligomerization is probably required to induce biological responses. Post-translationally, phosphorylated. Phosphorylation is stimulated by the ligand EFNA5. As to expression, detected in the 10-day embryonic brain, weaker expression in the rest of the 10-day embryo. Undetected in adult tissues.

It is found in the cell membrane. The protein resides in the cell projection. The protein localises to the axon. Its subcellular location is the dendrite. It catalyses the reaction L-tyrosyl-[protein] + ATP = O-phospho-L-tyrosyl-[protein] + ADP + H(+). Functionally, receptor tyrosine kinase which binds promiscuously GPI-anchored ephrin-A family ligands residing on adjacent cells, leading to contact-dependent bidirectional signaling into neighboring cells. The signaling pathway downstream of the receptor is referred to as forward signaling while the signaling pathway downstream of the ephrin ligand is referred to as reverse signaling. Among GPI-anchored ephrin-A ligands, EFNA5 most probably constitutes the cognate/functional ligand for EPHA5. Functions as an axon guidance molecule during development and may be involved in the development of the retinotectal, entorhino-hippocampal and hippocamposeptal pathways. Together with EFNA5 plays also a role in synaptic plasticity in adult brain through regulation of synaptogenesis. The sequence is that of Ephrin type-A receptor 5 (EPHA5) from Gallus gallus (Chicken).